The sequence spans 189 residues: Elongation factor P (189 aa).

This sequence belongs to the elongation factor P family.

The protein resides in the cytoplasm. It participates in protein biosynthesis; polypeptide chain elongation. Its function is as follows. Involved in peptide bond synthesis. Stimulates efficient translation and peptide-bond synthesis on native or reconstituted 70S ribosomes in vitro. Probably functions indirectly by altering the affinity of the ribosome for aminoacyl-tRNA, thus increasing their reactivity as acceptors for peptidyl transferase. The protein is Elongation factor P of Campylobacter lari (strain RM2100 / D67 / ATCC BAA-1060).